The primary structure comprises 227 residues: Glutathione S-transferase U27 (227 aa).

Residues 4–84 (EEVVVLNFWP…YIDEVWKDDK (81 aa)) enclose the GST N-terminal domain. Residues 14–15 (SM), 41–42 (QK), 55–56 (KI), and 68–69 (ES) each bind glutathione. Residues 92 to 217 (DPYQKSQCRF…LKIFDRVTQI (126 aa)) form the GST C-terminal domain.

It belongs to the GST superfamily. Tau family.

It is found in the cytoplasm. The protein resides in the cytosol. The catalysed reaction is RX + glutathione = an S-substituted glutathione + a halide anion + H(+). Its function is as follows. May be involved in the conjugation of reduced glutathione to a wide number of exogenous and endogenous hydrophobic electrophiles and have a detoxification role against certain herbicides. The polypeptide is Glutathione S-transferase U27 (GSTU27) (Arabidopsis thaliana (Mouse-ear cress)).